The primary structure comprises 525 residues: GMP synthase [glutamine-hydrolyzing] (525 aa).

Residues 9-207 (RILILDFGSQ…VRDICQCEAL (199 aa)) form the Glutamine amidotransferase type-1 domain. Cys-86 serves as the catalytic Nucleophile. Residues His-181 and Glu-183 contribute to the active site. In terms of domain architecture, GMPS ATP-PPase spans 208-400 (WTPAKIIDDA…LGLPYDMLYR (193 aa)). 235 to 241 (SGGVDSS) is a binding site for ATP.

As to quaternary structure, homodimer.

It carries out the reaction XMP + L-glutamine + ATP + H2O = GMP + L-glutamate + AMP + diphosphate + 2 H(+). The protein operates within purine metabolism; GMP biosynthesis; GMP from XMP (L-Gln route): step 1/1. In terms of biological role, catalyzes the synthesis of GMP from XMP. This Escherichia fergusonii (strain ATCC 35469 / DSM 13698 / CCUG 18766 / IAM 14443 / JCM 21226 / LMG 7866 / NBRC 102419 / NCTC 12128 / CDC 0568-73) protein is GMP synthase [glutamine-hydrolyzing].